Consider the following 179-residue polypeptide: Large ribosomal subunit protein bL17 (179 aa).

Residues 127–179 (TDTLPDTVIDTGPDSAPDPVPGSEPGSAAGDLPDADTAPADPGESSSNQRVIR) form a disordered region. Positions 154–168 (AAGDLPDADTAPADP) are enriched in low complexity. A compositionally biased stretch (polar residues) spans 170-179 (ESSSNQRVIR).

This sequence belongs to the bacterial ribosomal protein bL17 family. In terms of assembly, part of the 50S ribosomal subunit. Contacts protein L32.

The sequence is that of Large ribosomal subunit protein bL17 from Tropheryma whipplei (strain TW08/27) (Whipple's bacillus).